The primary structure comprises 1493 residues: Mitogen-activated protein kinase kinase kinase 1 (1493 aa).

Low complexity-rich tracts occupy residues 1-23 (MAAAAGDRASSSGFPGAAAASPE) and 33-42 (GSGAPAAGAG). Disordered regions lie at residues 1–171 (MAAA…DRPE) and 222–295 (LQGE…EETS). Position 2 is an N-acetylalanine (A2). Residue S21 is modified to Phosphoserine. The span at 84 to 94 (PPCPSTSPSPE) shows a compositional bias: pro residues. Low complexity-rich tracts occupy residues 95–108 (PADAAAGASGFQPA) and 135–151 (ARSPAGAEPPSAAAPSG). At S137 the chain carries Phosphoserine. Over residues 152 to 171 (REMENKETLKGLHKMDDRPE) the composition is skewed to basic and acidic residues. Over residues 230-257 (SAAPAPKGRRSPSPGSSPSGRSGKPESP) the composition is skewed to low complexity. At S265 the chain carries Phosphoserine. T275 carries the phosphothreonine modification. Residues S282, S287, and S290 each carry the phosphoserine modification. The segment at 328–356 (YRVFIGPQNCSCGRGTFCIHLLFVMLRVF) adopts an SWIM-type zinc-finger fold. The RING-type zinc-finger motif lies at 433–482 (CPICLLGMLDEESLTVCEDGCRNKLHHHCMSIWAEECRRNREPLICPLCR). The segment covering 496–506 (SSPVDSPTSLR) has biased composition (polar residues). 4 disordered regions span residues 496–524 (SSPVDSPTSLRGVQQPSSPQQPVAGSQRR), 866–910 (DTLD…LSAS), 923–955 (VGLPSSATTEQPKPTVQTKGRPHSQCLNSSPLS), and 992–1060 (PCKI…ASKN). Residues S497, S521, and S910 each carry the phosphoserine modification. The span at 507–522 (GVQQPSSPQQPVAGSQ) shows a compositional bias: low complexity. Polar residues-rich tracts occupy residues 925–940 (LPSSATTEQPKPTVQT) and 998–1014 (ASPQTQRKFSLQFQRTC). 2 positions are modified to phosphoserine: S999 and S1024. Positions 1049–1060 (GSTSKLGDASKN) are enriched in polar residues. The region spanning 1224–1489 (WLKGQQIGLG…SRELLKHPVF (266 aa)) is the Protein kinase domain. ATP is bound by residues 1230–1238 (IGLGAFSSC) and K1253. Catalysis depends on D1350, which acts as the Proton acceptor. Residues T1381 and T1393 each carry the phosphothreonine; by autocatalysis modification.

The protein belongs to the protein kinase superfamily. STE Ser/Thr protein kinase family. MAP kinase kinase kinase subfamily. Binds both upstream activators and downstream substrates in multimolecular complexes through its N-terminus. Oligomerizes after binding MAP4K2 or TRAF2. Interacts (via the kinase catalytic domain) with STK38. Interacts with GRIPAP1. The cofactor is Mg(2+). Post-translationally, autophosphorylated. In terms of tissue distribution, most highly expressed in spleen, kidney and lung.

It localises to the membrane. The enzyme catalyses L-seryl-[protein] + ATP = O-phospho-L-seryl-[protein] + ADP + H(+). It catalyses the reaction L-threonyl-[protein] + ATP = O-phospho-L-threonyl-[protein] + ADP + H(+). Its activity is regulated as follows. Activated by autophosphorylation on Thr-1381 and Thr-1393 following oligomerization. In terms of biological role, component of a protein kinase signal transduction cascade. Activates the ERK and JNK kinase pathways by phosphorylation of MAP2K1 and MAP2K4. May phosphorylate the MAPK8/JNK1 kinase. Activates CHUK and IKBKB, the central protein kinases of the NF-kappa-B pathway. This Rattus norvegicus (Rat) protein is Mitogen-activated protein kinase kinase kinase 1 (Map3k1).